Here is a 549-residue protein sequence, read N- to C-terminus: Oxygen-dependent choline dehydrogenase (549 aa).

Position 4–33 (Asp4–Glu33) interacts with FAD. His465 serves as the catalytic Proton acceptor.

It belongs to the GMC oxidoreductase family. Requires FAD as cofactor.

It carries out the reaction choline + A = betaine aldehyde + AH2. The enzyme catalyses betaine aldehyde + NAD(+) + H2O = glycine betaine + NADH + 2 H(+). It functions in the pathway amine and polyamine biosynthesis; betaine biosynthesis via choline pathway; betaine aldehyde from choline (cytochrome c reductase route): step 1/1. In terms of biological role, involved in the biosynthesis of the osmoprotectant glycine betaine. Catalyzes the oxidation of choline to betaine aldehyde and betaine aldehyde to glycine betaine at the same rate. This Rhizobium johnstonii (strain DSM 114642 / LMG 32736 / 3841) (Rhizobium leguminosarum bv. viciae) protein is Oxygen-dependent choline dehydrogenase.